A 348-amino-acid chain; its full sequence is MAFFIASSPHLRSKRSTADVMRWVLVCALPGLIAQTYFFGYGTLIQLLLAISVAVALEAGIMLLRKRSPISALRDYSAVVTAWLLAVAIPPLSPWWVVVIGLIFAIVIAKHLYGGLGQNPFNPAMIAYVVLLISFPVQMTSWMAPIKLTAEPSSLVDSFSLIFGGFDSDGLSLQQIRTGIDGITMATPLDAIKTSLKAGHTMSETLTQPQFSGFAGIGWEWVNIAYLLGGLILLKLRIIRWHIPVAMLAGLVFTALLAQLFAPGTTASPMIHLLSGATMLGAFFIATDPVSASTTDKGRLIYGFFIGAMVFLIRSWGGFPDGVAFAVLLANMCVPLIDYYTKPRTYGH.

At 1-22 (MAFFIASSPHLRSKRSTADVMR) the chain is on the cytoplasmic side. The next 2 membrane-spanning stretches (helical) occupy residues 23-43 (WVLVCALPGLIAQTYFFGYGT) and 44-64 (LIQLLLAISVAVALEAGIMLL). Topologically, residues 65 to 71 (RKRSPIS) are cytoplasmic. A helical transmembrane segment spans residues 72–91 (ALRDYSAVVTAWLLAVAIPP). Over 92–94 (LSP) the chain is Periplasmic. The helical transmembrane segment at 95–117 (WWVVVIGLIFAIVIAKHLYGGLG) threads the bilayer. The Cytoplasmic portion of the chain corresponds to 118–125 (QNPFNPAM). Residues 126–146 (IAYVVLLISFPVQMTSWMAPI) form a helical membrane-spanning segment. The Periplasmic portion of the chain corresponds to 147–213 (KLTAEPSSLV…ETLTQPQFSG (67 aa)). Threonine 187 carries the post-translational modification FMN phosphoryl threonine. A helical transmembrane segment spans residues 214–234 (FAGIGWEWVNIAYLLGGLILL). The Cytoplasmic portion of the chain corresponds to 235 to 242 (KLRIIRWH). Residues 243 to 263 (IPVAMLAGLVFTALLAQLFAP) traverse the membrane as a helical segment. Topologically, residues 264 to 265 (GT) are periplasmic. The helical transmembrane segment at 266–286 (TASPMIHLLSGATMLGAFFIA) threads the bilayer. Topologically, residues 287–299 (TDPVSASTTDKGR) are cytoplasmic. The next 2 helical transmembrane spans lie at 300 to 320 (LIYGFFIGAMVFLIRSWGGFP) and 321 to 341 (DGVAFAVLLANMCVPLIDYYT). Residues 342 to 348 (KPRTYGH) lie on the Cytoplasmic side of the membrane.

This sequence belongs to the NqrB/RnfD family. The complex is composed of six subunits: RnfA, RnfB, RnfC, RnfD, RnfE and RnfG. It depends on FMN as a cofactor.

The protein localises to the cell inner membrane. In terms of biological role, part of a membrane-bound complex that couples electron transfer with translocation of ions across the membrane. In Vibrio cholerae serotype O1 (strain ATCC 39541 / Classical Ogawa 395 / O395), this protein is Ion-translocating oxidoreductase complex subunit D.